A 595-amino-acid chain; its full sequence is P2X purinoceptor 7 (595 aa).

Topologically, residues 1 to 22 (MPACCSWNDVLQYETNKVTRIQ) are cytoplasmic. Cys4 is lipidated: S-palmitoyl cysteine. The chain crosses the membrane as a helical span at residues 23–46 (STNYGTVKWVLHMIVFSYISFALV). Residues 47–328 (SDKLYQRKEP…ILVFGTGGKF (282 aa)) lie on the Extracellular side of the membrane. An N-linked (GlcNAc...) asparagine glycan is attached at Asn74. 3 cysteine pairs are disulfide-bonded: Cys119-Cys168, Cys129-Cys152, and Cys135-Cys162. Residues Arg125 and Arg133 each carry the ADP-ribosylarginine; by ART2B modification. Asn187 is a glycosylation site (N-linked (GlcNAc...) asparagine). An ATP-binding site is contributed by Thr189. Asn202 and Asn213 each carry an N-linked (GlcNAc...) asparagine glycan. Cys216 and Cys226 are oxidised to a cystine. An N-linked (GlcNAc...) asparagine glycan is attached at Asn241. Cys260 and Cys269 form a disulfide bridge. Positions 294 and 311 each coordinate ATP. The helical transmembrane segment at 329-353 (DIIQLVVYIGSTLSYFGLATVCIDL) threads the bilayer. Ser342 contacts Na(+). Residues 354–595 (LINTYSSAFC…GQYSGFKYPY (242 aa)) lie on the Cytoplasmic side of the membrane. The segment at 360 to 377 (SAFCRSGVYPYCKCCEPC) is C-cys anchor. Residues Cys363, Cys374, and Cys377 are each lipidated (S-palmitoyl cysteine). Residue Ser390 is modified to Phosphoserine. The interval 395 to 595 (KPTLKYVSFV…GQYSGFKYPY (201 aa)) is cytoplasmic ballast. 3 residues coordinate Zn(2+): Cys479, Cys499, and Cys506. Residues Arg546, His547, Tyr550, and Ala567 each coordinate GTP. Zn(2+) is bound at residue Cys572. Lys583, Ser589, and Gly590 together coordinate GTP.

This sequence belongs to the P2X receptor family. In terms of assembly, homotrimers. Interacts with LAMA3, ITGB2, ACTB, ACTN4, SVIL, MPP3, HSPA1, HSPCB, HSPA8, PIK230 and PTPRB. Interacts (via C-terminus) with EMP2. Post-translationally, phosphorylation results in its inactivation. ADP-ribosylation at Arg-125 is necessary and sufficient to activate P2RX7 and gate the channel. In terms of processing, palmitoylation of several cysteines in the C-terminal cytoplasmic tail is required for efficient localization to cell surface. Palmitoylation prevents channel desensitization by physically anchoring the palmitoylated groups to the membrane.

It localises to the cell membrane. It catalyses the reaction Ca(2+)(in) = Ca(2+)(out). It carries out the reaction K(+)(in) = K(+)(out). The enzyme catalyses Na(+)(in) = Na(+)(out). Activated by high extracellular ATP levels (0.1-2.5 mM). The synthetic analog 2'(3')-O-(4-benzoylbenzoyl)ATP (BzATP) acts as a potent agonist. Does not undergo desensitization, instead, undergoes a facilitation process where currents progressively increase with repetitive or prolonged agonist application. Palmitoylation prevents channel desensitization. The permeability of the P2RX7 channel is modulated by the amount of cholesterol in the plasma membrane. ATP-gated nonselective transmembrane cation channel. Requires high millimolar-range concentrations of ATP to become activated. ATP binding trigers the rapid opening of the channel and allows Na(+) and Ca(2+) influx and K(+) efflux. Has also the ability to form a large pore in the cell membrane, allowing the passage of large cationic molecules. In microglia, may mediate NADPH transport across the plasma membrane. In immune cells, P2RX7 acts as a molecular sensor in pathological inflammatory states by detecting and responding to high local concentrations of extracellar ATP. In microglial cells, P2RX7 activation leads to the release of pro-inflammatory cytokines, such as IL-1beta and IL-18, through the activation of the NLRP3 inflammasome and caspase-1. Cooperates with KCNK6 to activate NLRP3 inflammasome. Activates death pathways leading to apoptosis and autophagy. Activates death pathways leading to pyroptosis. In Mus musculus (Mouse), this protein is P2X purinoceptor 7 (P2rx7).